The chain runs to 314 residues: MSDTVTDGDASRRRHGRVVVVYGGRSAEREVSLLSGGAVLASLVRSGVDAHGFDFAGGGLSGLEALAPDRVFIAMHGRDGEDGSLQGALELLGIPYTGSGVLASALGMDKERTKQLWRAHGLPTPESVMLEGEPDWDAVIEALGLPLIVKPVHEGSTIGISIVETRDALIAAHAEASRFDSAIMAERFVQGEEYTVSLLGDEVLPAIRVEVPSGFYDYEAKYHSDTTRYLLPCGLEQEEERMLGDVCRRAFEAIGGRGWGRVDVMRDAQGRFWLLEVNTVPGMTDHSLVPQAAAHAGLDFDALVLRILDTTTGS.

The ATP-grasp domain occupies 114–309 (KQLWRAHGLP…FDALVLRILD (196 aa)). 140-195 (IEALGLPLIVKPVHEGSTIGISIVETRDALIAAHAEASRFDSAIMAERFVQGEEYT) is an ATP binding site. Mg(2+) contacts are provided by D263, E276, and N278.

This sequence belongs to the D-alanine--D-alanine ligase family. Mg(2+) serves as cofactor. The cofactor is Mn(2+).

The protein localises to the cytoplasm. The enzyme catalyses 2 D-alanine + ATP = D-alanyl-D-alanine + ADP + phosphate + H(+). The protein operates within cell wall biogenesis; peptidoglycan biosynthesis. Its function is as follows. Cell wall formation. The protein is D-alanine--D-alanine ligase of Chromohalobacter salexigens (strain ATCC BAA-138 / DSM 3043 / CIP 106854 / NCIMB 13768 / 1H11).